The following is a 748-amino-acid chain: Probable transcriptional regulator SLK1 (748 aa).

2 disordered regions span residues 67–93 (QHLP…RENN) and 138–163 (QQRL…QQQQ). A compositionally biased stretch (low complexity) spans 71–81 (QQQQQQLLQQQ). The tract at residues 204 to 451 (PAENCITYWR…EQKIGPIEGL (248 aa)) is dimerization. A Nuclear localization signal motif is present at residues 213-227 (RKFVAEYFSPRAKQR). Residues 572-587 (NAMNNPNSNTGKQEGF) are compositionally biased toward polar residues. Disordered stretches follow at residues 572-653 (NAMN…GNTP) and 667-712 (ENGG…NNSF). Over residues 588–606 (SSQNPTPNSNQSPSSSSQQ) the composition is skewed to low complexity. Over residues 615–653 (FPNSPQMQQQQRTMNGPTNILPQNHPHQLQSPHSHGNTP) the composition is skewed to polar residues. Over residues 667 to 686 (ENGGSVQQQQAFSGQSGSNS) the composition is skewed to low complexity. The segment covering 687 to 699 (NAERNTTASTSNI) has biased composition (polar residues).

It belongs to the adn1/SEU family. In terms of assembly, forms corepressor complexes with LUH; LUH is the transcription repressor subunit and SLK1 the specific DNA-binding adapters. In terms of tissue distribution, expressed in young flower meristems, ovules and the carpel margin meristem.

The protein localises to the nucleus. Probable transcription regulator that functions in the development of the carpel margin meristem similarly to SEUSS (SEU). In association with SEU, supports organ development from meristematic regions by facilitating auxin response and thus organ initiation, and by sustaining meristematic potential through the maintenance of PHABULOSA expression. DNA-binding adapter subunit of the SEU-SLK1 transcriptional corepressor of abiotic stress (e.g. salt and osmotic stress) response genes. This chain is Probable transcriptional regulator SLK1 (SLK1), found in Arabidopsis thaliana (Mouse-ear cress).